A 122-amino-acid polypeptide reads, in one-letter code: Large ribosomal subunit protein uL14 (122 aa).

The protein belongs to the universal ribosomal protein uL14 family. In terms of assembly, part of the 50S ribosomal subunit. Forms a cluster with proteins L3 and L19. In the 70S ribosome, L14 and L19 interact and together make contacts with the 16S rRNA in bridges B5 and B8.

Binds to 23S rRNA. Forms part of two intersubunit bridges in the 70S ribosome. The protein is Large ribosomal subunit protein uL14 of Rickettsia massiliae (strain Mtu5).